Here is a 476-residue protein sequence, read N- to C-terminus: MVRGTKRRRSSAEKPIVVVPVTRDDTMPVDEDLVVGESQCAASKPFAKLVGVRRGISSIDLADDHFVCGRGSDDAPTNFNFSQVAKDVGLYRFISKIQFSIDRDTETRRIYLHDHSRNGTLVNQEMIGKGLSRELMNGDLISIGIPALIIFVYESADADHHPEELTKKYHVTSHSLGKGGFGKVLLGYKKSDRSVVAIKQLNTQFSTRCSRAIAKTRDIRNEVEVMKKLSHPNIVAIYDWITVAKYSYMVIEYVGGGEFFSKVVDSKYNRMGLGESLGKYFAFQLIDAILYLHSVGICHRDIKPENILCSDKAERCILKLTDFGMAKNSVNRMKTRCGTPSYNAPEIVANEGVEYTPKVDIWSLGCVLFITFSGYPPFSEEYTDMTMDEQVLTGRLIFHAQWRRITVETQNMIKWMLTVEPSNRPSAVELMSTQWMKCADCRTAKQDILKSIKPISAAAPAALQTTQAGPVKKAKM.

The 62-residue stretch at 66 to 127 folds into the FHA domain; that stretch reads FVCGRGSDDA…NGTLVNQEMI (62 aa). Positions 170-436 constitute a Protein kinase domain; it reads HVTSHSLGKG…AVELMSTQWM (267 aa). ATP-binding positions include 177 to 184, Lys199, and 252 to 258; these read GKGGFGKV and EYVGGGE. Asp301 serves as the catalytic Proton acceptor. Residues 305 to 306 and Asp322 each bind ATP; that span reads EN.

The protein belongs to the protein kinase superfamily. CAMK Ser/Thr protein kinase family. CHK2 subfamily. The cofactor is Mg(2+). In terms of tissue distribution, highly expressed in germline tissue.

The protein localises to the nucleus. The catalysed reaction is L-seryl-[protein] + ATP = O-phospho-L-seryl-[protein] + ADP + H(+). It carries out the reaction L-threonyl-[protein] + ATP = O-phospho-L-threonyl-[protein] + ADP + H(+). Serine/threonine-protein kinase which is required for checkpoint-mediated cell cycle arrest, activation of DNA repair and apoptosis in response to the presence of DNA double-strand breaks. May also negatively regulate cell cycle progression during unperturbed cell cycles. Phosphorylates and inhibits cdc25 phosphatase, preventing entry into mitosis. Required for nuclear reorganization and homologous chromosome pairing during meiotic prophase. This chain is Serine/threonine-protein kinase chk-2 (chk-2), found in Caenorhabditis elegans.